The sequence spans 404 residues: Probable ribosomal oxygenase HI_0396 (404 aa).

A JmjC domain is found at 102-231 (ELGQLWNKFG…LIDGISKGFC (130 aa)). Fe cation-binding residues include His-135, Asp-137, and His-199.

This sequence belongs to the ROX family. Requires Fe(2+) as cofactor.

Oxygenase that catalyzes the hydroxylation of a ribosomal protein. The protein is Probable ribosomal oxygenase HI_0396 of Haemophilus influenzae (strain ATCC 51907 / DSM 11121 / KW20 / Rd).